Here is a 42-residue protein sequence, read N- to C-terminus: Iota-conotoxin-like R11.16 (42 aa).

Cystine bridges form between Cys5–Cys19, Cys12–Cys22, Cys18–Cys27, and Cys21–Cys36.

It belongs to the conotoxin I1 superfamily. As to expression, expressed by the venom duct.

The protein resides in the secreted. Iota-conotoxins bind to voltage-gated sodium channels (Nav) and act as agonists by shifting the voltage-dependence of activation to more hyperpolarized levels. Produces general excitatory symptoms. This chain is Iota-conotoxin-like R11.16, found in Conus radiatus (Rayed cone).